Here is a 449-residue protein sequence, read N- to C-terminus: Glucose-6-phosphate isomerase (449 aa).

The Proton donor role is filled by glutamate 291. Active-site residues include histidine 312 and lysine 426.

It belongs to the GPI family.

The protein localises to the cytoplasm. The enzyme catalyses alpha-D-glucose 6-phosphate = beta-D-fructose 6-phosphate. The protein operates within carbohydrate biosynthesis; gluconeogenesis. Its pathway is carbohydrate degradation; glycolysis; D-glyceraldehyde 3-phosphate and glycerone phosphate from D-glucose: step 2/4. Its function is as follows. Catalyzes the reversible isomerization of glucose-6-phosphate to fructose-6-phosphate. This is Glucose-6-phosphate isomerase from Streptococcus pyogenes serotype M4 (strain MGAS10750).